We begin with the raw amino-acid sequence, 1828 residues long: Separin (1828 aa).

A Peptidase C50 domain is found at 1647 to 1741 (KEAGSYILNP…SGALYECGSF (95 aa)). Cysteine 1730 is a catalytic residue.

Interacts with cut2. Interacts with rad21.

Its subcellular location is the cytoplasm. It is found in the nucleus. It catalyses the reaction All bonds known to be hydrolyzed by this endopeptidase have arginine in P1 and an acidic residue in P4. P6 is often occupied by an acidic residue or by a hydroxy-amino-acid residue, the phosphorylation of which enhances cleavage.. It is inactivated via its interaction with cut2, which probably covers its active site. Cut2 degradation at anaphase, liberates it and triggers rad21 cleavage. Functionally, caspase-like protease, which plays a central role in the chromosome segregation by cleaving the rad21 subunit of the cohesin complex at the onset of anaphase. During most of the cell cycle, it is inactivated by securin/cut2 protein. It is also required for pointed nuclear formation. This Schizosaccharomyces pombe (strain 972 / ATCC 24843) (Fission yeast) protein is Separin (cut1).